Consider the following 88-residue polypeptide: Putative membrane protein insertion efficiency factor (88 aa).

Positions 68–88 (VPPPNSDTRARGEADARSHRL) are disordered. Residues 75 to 88 (TRARGEADARSHRL) show a composition bias toward basic and acidic residues.

It belongs to the UPF0161 family.

Its subcellular location is the cell inner membrane. Functionally, could be involved in insertion of integral membrane proteins into the membrane. The sequence is that of Putative membrane protein insertion efficiency factor from Burkholderia orbicola (strain MC0-3).